The primary structure comprises 281 residues: Protein phosphatase 2C homolog 1 (281 aa).

Positions 20–281 (RVGVAENKNS…DNVTVMVVFL (262 aa)) constitute a PPM-type phosphatase domain. Positions 58, 59, 233, and 272 each coordinate Mn(2+).

It belongs to the PP2C family. In terms of assembly, interacts with NBP2 and PBS2. Mg(2+) serves as cofactor. Mn(2+) is required as a cofactor.

The protein localises to the peroxisome. The enzyme catalyses O-phospho-L-seryl-[protein] + H2O = L-seryl-[protein] + phosphate. It catalyses the reaction O-phospho-L-threonyl-[protein] + H2O = L-threonyl-[protein] + phosphate. Functionally, serine and threonine phosphatase. Involved in tRNA splicing and cell separation. This is Protein phosphatase 2C homolog 1 (PTC1) from Saccharomyces cerevisiae (strain ATCC 204508 / S288c) (Baker's yeast).